Reading from the N-terminus, the 178-residue chain is N-alpha-acetyltransferase 20 (178 aa).

Positions 2–157 constitute an N-acetyltransferase domain; sequence TTLRAFTCDD…DAYDMRKALS (156 aa).

It belongs to the acetyltransferase family. ARD1 subfamily. Component of the N-terminal acetyltransferase B (NatB) complex which is composed of NAA20 and NAA25.

The protein localises to the cytoplasm. Its subcellular location is the nucleus. It catalyses the reaction N-terminal L-methionyl-L-asparaginyl-[protein] + acetyl-CoA = N-terminal N(alpha)-acetyl-L-methionyl-L-asparaginyl-[protein] + CoA + H(+). The enzyme catalyses N-terminal L-methionyl-L-glutaminyl-[protein] + acetyl-CoA = N-terminal N(alpha)-acetyl-L-methionyl-L-glutaminyl-[protein] + CoA + H(+). It carries out the reaction N-terminal L-methionyl-L-aspartyl-[protein] + acetyl-CoA = N-terminal N(alpha)-acetyl-L-methionyl-L-aspartyl-[protein] + CoA + H(+). The catalysed reaction is N-terminal L-methionyl-L-glutamyl-[protein] + acetyl-CoA = N-terminal N(alpha)-acetyl-L-methionyl-L-glutamyl-[protein] + CoA + H(+). Functionally, catalytic subunit of the NatB complex which catalyzes acetylation of the N-terminal methionine residues of peptides beginning with Met-Asp, Met-Glu, Met-Asn and Met-Gln. Proteins with cell cycle functions are overrepresented in the pool of NatB substrates. Required for maintaining the structure and function of actomyosin fibers and for proper cellular migration. The chain is N-alpha-acetyltransferase 20 (NAA20) from Homo sapiens (Human).